Consider the following 90-residue polypeptide: MGAAYKVFGKTVQPHVLAISTFIATAAVASYFTTKPKTKNEGKNSSALSQQKSGESSNSDAMGKDDDVVKSIEGFLNDLEKDTRQDTKAN.

The chain crosses the membrane as a helical span at residues 15–34; that stretch reads HVLAISTFIATAAVASYFTT. The disordered stretch occupies residues 34–65; the sequence is TKPKTKNEGKNSSALSQQKSGESSNSDAMGKD. Residues 43-60 are compositionally biased toward polar residues; sequence KNSSALSQQKSGESSNSD. The N-linked (GlcNAc...) asparagine glycan is linked to asparagine 44.

The protein localises to the mitochondrion membrane. This is an uncharacterized protein from Saccharomyces cerevisiae (strain ATCC 204508 / S288c) (Baker's yeast).